Reading from the N-terminus, the 94-residue chain is Co-chaperonin GroES (94 aa).

It belongs to the GroES chaperonin family. Heptamer of 7 subunits arranged in a ring. Interacts with the chaperonin GroEL.

It localises to the cytoplasm. Functionally, together with the chaperonin GroEL, plays an essential role in assisting protein folding. The GroEL-GroES system forms a nano-cage that allows encapsulation of the non-native substrate proteins and provides a physical environment optimized to promote and accelerate protein folding. GroES binds to the apical surface of the GroEL ring, thereby capping the opening of the GroEL channel. The protein is Co-chaperonin GroES of Staphylococcus aureus (strain Mu50 / ATCC 700699).